The primary structure comprises 428 residues: Hercynine oxygenase (428 aa).

Position 46 (His-46) interacts with Fe cation. 82-85 (RASR) contacts gamma-L-glutamyl-L-cysteine. Fe cation is bound by residues His-129 and His-133. Residues Asp-411 and Arg-415 each coordinate gamma-L-glutamyl-L-cysteine.

It belongs to the EgtB family. Monomer. Fe(2+) is required as a cofactor.

The enzyme catalyses gamma-L-glutamyl-L-cysteine + hercynine + O2 = gamma-L-glutamyl-hercynylcysteine S-oxide + H2O. It functions in the pathway amino-acid biosynthesis; ergothioneine biosynthesis. In terms of biological role, catalyzes the oxidative sulfurization of hercynine (N-alpha,N-alpha,N-alpha-trimethyl-L-histidine) into hercynyl-gamma-L-glutamyl-L-cysteine sulfoxide, a step in the biosynthesis pathway of ergothioneine. Cannot use the alternative thiols cysteine, N-acetylcysteine, or glutathione instead of gamma-glutamylcysteine as substrates, and histidine is a poor sulfur acceptor substrate compared to hercynine. The polypeptide is Hercynine oxygenase (Mycolicibacterium smegmatis (strain ATCC 700084 / mc(2)155) (Mycobacterium smegmatis)).